The primary structure comprises 521 residues: Glucose-6-phosphate isomerase (521 aa).

Glu327 serves as the catalytic Proton donor. Residues His358 and Lys486 contribute to the active site.

It belongs to the GPI family.

Its subcellular location is the cytoplasm. It catalyses the reaction alpha-D-glucose 6-phosphate = beta-D-fructose 6-phosphate. It participates in carbohydrate biosynthesis; gluconeogenesis. The protein operates within carbohydrate degradation; glycolysis; D-glyceraldehyde 3-phosphate and glycerone phosphate from D-glucose: step 2/4. Catalyzes the reversible isomerization of glucose-6-phosphate to fructose-6-phosphate. The polypeptide is Glucose-6-phosphate isomerase (Bordetella bronchiseptica (strain ATCC BAA-588 / NCTC 13252 / RB50) (Alcaligenes bronchisepticus)).